A 143-amino-acid chain; its full sequence is ATP synthase subunit b' (143 aa).

Residues 6-26 (ATLPLMALQFVLLAIILNAIF) form a helical membrane-spanning segment.

The protein belongs to the ATPase B chain family. F-type ATPases have 2 components, F(1) - the catalytic core - and F(0) - the membrane proton channel. F(1) has five subunits: alpha(3), beta(3), gamma(1), delta(1), epsilon(1). F(0) has four main subunits: a(1), b(1), b'(1) and c(10-14). The alpha and beta chains form an alternating ring which encloses part of the gamma chain. F(1) is attached to F(0) by a central stalk formed by the gamma and epsilon chains, while a peripheral stalk is formed by the delta, b and b' chains.

The protein resides in the cellular thylakoid membrane. F(1)F(0) ATP synthase produces ATP from ADP in the presence of a proton or sodium gradient. F-type ATPases consist of two structural domains, F(1) containing the extramembraneous catalytic core and F(0) containing the membrane proton channel, linked together by a central stalk and a peripheral stalk. During catalysis, ATP synthesis in the catalytic domain of F(1) is coupled via a rotary mechanism of the central stalk subunits to proton translocation. Functionally, component of the F(0) channel, it forms part of the peripheral stalk, linking F(1) to F(0). The b'-subunit is a diverged and duplicated form of b found in plants and photosynthetic bacteria. This chain is ATP synthase subunit b', found in Crocosphaera subtropica (strain ATCC 51142 / BH68) (Cyanothece sp. (strain ATCC 51142)).